We begin with the raw amino-acid sequence, 117 residues long: MDKKKLLYWVGGGLVLILIWLWFRNRPAAQVASNWEGPPYMTYNQPQAGSVTLPVAGYTSPSPTLPNRNRSCGCNPAVSAAMAQGADLASKLTDSITSQLNDYASSLNDYLASQAGV.

A helical transmembrane segment spans residues 7 to 24; sequence LYWVGGGLVLILIWLWFR.

Its subcellular location is the virion membrane. Functionally, protein of the infection vertex complex, which increases the vertex stability. Anchors the vertex structure to the viral membrane. Essential for viral infectivity. The polypeptide is Protein P16 (XVI) (Enterobacteria phage PRD1 (Bacteriophage PRD1)).